We begin with the raw amino-acid sequence, 564 residues long: Benomyl/methotrexate resistance protein (564 aa).

The tract at residues 60–101 is disordered; the sequence is IDNQGEPNSSQSSSSNNTIVDNNNNNNNDVDGDKIVVTWDGD. The segment covering 67–88 has biased composition (low complexity); sequence NSSQSSSSNNTIVDNNNNNNND. A run of 12 helical transmembrane segments spans residues 116 to 136, 153 to 173, 184 to 204, 210 to 229, 241 to 262, 274 to 294, 358 to 374, 393 to 411, 431 to 451, 457 to 476, 489 to 506, and 530 to 551; these read AFFI…SAVY, VATL…LVFS, TSIY…TALV, LCIL…ATGG, LPVG…GPFF, WTFW…CFTL, IYIA…FEVF, YMSI…IPVI, IPIA…FGWS, HWVG…FLIF, PHYI…RSVI, and WGSS…LFYL.

It belongs to the major facilitator superfamily. CAR1 family.

It localises to the membrane. In terms of biological role, probable transporter. Confers resistance to benomyl and methotrexate. The polypeptide is Benomyl/methotrexate resistance protein (MDR1) (Candida albicans (Yeast)).